The sequence spans 395 residues: Acetate kinase (395 aa).

Residue asparagine 10 coordinates Mg(2+). Lysine 17 contacts ATP. Arginine 87 contacts substrate. The active-site Proton donor/acceptor is aspartate 144. ATP-binding positions include 204-208, 279-281, and 327-331; these read HLGNG, DMR, and GIGEN. Glutamate 381 contacts Mg(2+).

This sequence belongs to the acetokinase family. As to quaternary structure, homodimer. Mg(2+) serves as cofactor. The cofactor is Mn(2+).

It is found in the cytoplasm. It carries out the reaction acetate + ATP = acetyl phosphate + ADP. Its pathway is metabolic intermediate biosynthesis; acetyl-CoA biosynthesis; acetyl-CoA from acetate: step 1/2. Its function is as follows. Catalyzes the formation of acetyl phosphate from acetate and ATP. Can also catalyze the reverse reaction. The polypeptide is Acetate kinase (Stutzerimonas stutzeri (strain A1501) (Pseudomonas stutzeri)).